We begin with the raw amino-acid sequence, 417 residues long: Gamma-glutamyl phosphate reductase (417 aa).

This sequence belongs to the gamma-glutamyl phosphate reductase family.

Its subcellular location is the cytoplasm. The enzyme catalyses L-glutamate 5-semialdehyde + phosphate + NADP(+) = L-glutamyl 5-phosphate + NADPH + H(+). Its pathway is amino-acid biosynthesis; L-proline biosynthesis; L-glutamate 5-semialdehyde from L-glutamate: step 2/2. Functionally, catalyzes the NADPH-dependent reduction of L-glutamate 5-phosphate into L-glutamate 5-semialdehyde and phosphate. The product spontaneously undergoes cyclization to form 1-pyrroline-5-carboxylate. The protein is Gamma-glutamyl phosphate reductase of Escherichia coli O157:H7.